We begin with the raw amino-acid sequence, 150 residues long: Small ribosomal subunit protein eS19 (150 aa).

The protein belongs to the eukaryotic ribosomal protein eS19 family. As to quaternary structure, part of the 30S ribosomal subunit.

Functionally, may be involved in maturation of the 30S ribosomal subunit. The chain is Small ribosomal subunit protein eS19 from Pyrococcus horikoshii (strain ATCC 700860 / DSM 12428 / JCM 9974 / NBRC 100139 / OT-3).